We begin with the raw amino-acid sequence, 1193 residues long: Nucleolar protein 6 (1193 aa).

Disordered regions lie at residues 1–69 and 1137–1193; these read MRFV…TKNV and KREQ…KVLK. Basic and acidic residues-rich tracts occupy residues 31–46 and 1151–1161; these read AGDHSDLDEPKPKIAK and DANKAEEESKP. Ser-35 is subject to Phosphoserine. Residues 1162–1184 are compositionally biased toward basic residues; sequence KPKKHRQRKGTGKKALPKRKRLI.

Belongs to the NRAP family. Part of the small subunit (SSU) processome, composed of more than 70 proteins and the RNA chaperone small nucleolar RNA (snoRNA) U3. Expressed in nurse cells at stages 9-10 of oogenesis and exported to the oocyte.

It localises to the nucleus. It is found in the nucleolus. The protein localises to the chromosome. Its function is as follows. Part of the small subunit (SSU) processome, first precursor of the small eukaryotic ribosomal subunit. During the assembly of the SSU processome in the nucleolus, many ribosome biogenesis factors, an RNA chaperone and ribosomal proteins associate with the nascent pre-rRNA and work in concert to generate RNA folding, modifications, rearrangements and cleavage as well as targeted degradation of pre-ribosomal RNA by the RNA exosome. The polypeptide is Nucleolar protein 6 (Drosophila melanogaster (Fruit fly)).